Reading from the N-terminus, the 379-residue chain is Queuine tRNA-ribosyltransferase (379 aa).

The active-site Proton acceptor is the Asp-94. Substrate contacts are provided by residues Asp-94–Phe-98, Asp-148, Gln-191, and Gly-218. Residues Gly-249–Ser-255 are RNA binding. The active-site Nucleophile is Asp-268. An RNA binding; important for wobble base 34 recognition region spans residues Thr-273 to Arg-277. 4 residues coordinate Zn(2+): Cys-306, Cys-308, Cys-311, and His-337.

The protein belongs to the queuine tRNA-ribosyltransferase family. Homodimer. Within each dimer, one monomer is responsible for RNA recognition and catalysis, while the other monomer binds to the replacement base PreQ1. Zn(2+) is required as a cofactor.

It carries out the reaction 7-aminomethyl-7-carbaguanine + guanosine(34) in tRNA = 7-aminomethyl-7-carbaguanosine(34) in tRNA + guanine. It functions in the pathway tRNA modification; tRNA-queuosine biosynthesis. In terms of biological role, catalyzes the base-exchange of a guanine (G) residue with the queuine precursor 7-aminomethyl-7-deazaguanine (PreQ1) at position 34 (anticodon wobble position) in tRNAs with GU(N) anticodons (tRNA-Asp, -Asn, -His and -Tyr). Catalysis occurs through a double-displacement mechanism. The nucleophile active site attacks the C1' of nucleotide 34 to detach the guanine base from the RNA, forming a covalent enzyme-RNA intermediate. The proton acceptor active site deprotonates the incoming PreQ1, allowing a nucleophilic attack on the C1' of the ribose to form the product. After dissociation, two additional enzymatic reactions on the tRNA convert PreQ1 to queuine (Q), resulting in the hypermodified nucleoside queuosine (7-(((4,5-cis-dihydroxy-2-cyclopenten-1-yl)amino)methyl)-7-deazaguanosine). This chain is Queuine tRNA-ribosyltransferase, found in Listeria monocytogenes serotype 4a (strain HCC23).